A 76-amino-acid chain; its full sequence is Kappa-actitoxin-Avd4m (76 aa).

A signal peptide spans 1–19; sequence MNKALFLCLVVLCAAVVFA. A propeptide spanning residues 20–31 is cleaved from the precursor; that stretch reads AEDLQKAKHAPF. Cystine bridges form between cysteine 37-cysteine 72, cysteine 39-cysteine 65, and cysteine 55-cysteine 73.

This sequence belongs to the sea anemone type 3 (BDS) potassium channel toxin family. In terms of tissue distribution, weakly expressed in the ectodermal tissue from the distal and proximal tentacles, body wall, and oral disk.

The protein resides in the secreted. It is found in the nematocyst. Its function is as follows. Blocks Kv3 voltage-gated potassium channels. Reduces blood pressure. The sequence is that of Kappa-actitoxin-Avd4m from Anemonia viridis (Snakelocks anemone).